A 333-amino-acid chain; its full sequence is Olfactory receptor 9S13 (333 aa).

Residues 1–35 (MATAVHRNGSLTPVSLRVFVLVGFGGGALTQALLF) are Extracellular-facing. Asparagine 8 is a glycosylation site (N-linked (GlcNAc...) asparagine). A helical transmembrane segment spans residues 36–56 (AVFLVLYVVTVLGNLTMIVVI). The Cytoplasmic portion of the chain corresponds to 57–72 (TLDARLHSPMYFFLKN). A helical transmembrane segment spans residues 73 to 93 (LSFVDLCYSSAIAPNALANFL). Topologically, residues 94–106 (STSKVISFEACAT) are extracellular. An intrachain disulfide couples cysteine 104 to cysteine 196. A helical membrane pass occupies residues 107-127 (QFFFFSLLATTETFLLAVMAY). Residues 128-150 (DRFMAICSPLRYPVTMCPTTCTR) lie on the Cytoplasmic side of the membrane. A helical membrane pass occupies residues 151–171 (LVLGTFCVGCLNSIVQTSLTF). The Extracellular segment spans residues 172–203 (QLPFCSSNRIDHFYCDVPPLLQLACASTALNE). The helical transmembrane segment at 204–224 (LFLFGLCGFIIVSTTLAVLVS) threads the bilayer. Topologically, residues 225–251 (YGYITVTILRMHSGSGRHKVFSTCGSH) are cytoplasmic. A helical membrane pass occupies residues 252 to 272 (LTAVSLFYGTLFVMYAQPGAL). Topologically, residues 273-278 (TSMEQG) are extracellular. Residues 279-299 (KVVSIFYTLVIPMLNPLIYSL) form a helical membrane-spanning segment. The Cytoplasmic segment spans residues 300–333 (RNKDVKDALQRLGQRHSLVKAVRGCPAAGGNASV).

It belongs to the G-protein coupled receptor 1 family.

The protein localises to the cell membrane. In terms of biological role, odorant receptor. The polypeptide is Olfactory receptor 9S13 (Mus musculus (Mouse)).